We begin with the raw amino-acid sequence, 832 residues long: G-type lectin S-receptor-like serine/threonine-protein kinase RLK1 (832 aa).

Positions methionine 1–serine 24 are cleaved as a signal peptide. Residues glutamine 25–lysine 461 lie on the Extracellular side of the membrane. 6 N-linked (GlcNAc...) asparagine glycosylation sites follow: asparagine 29, asparagine 92, asparagine 100, asparagine 178, asparagine 240, and asparagine 251. The 121-residue stretch at serine 37 to tryptophan 157 folds into the Bulb-type lectin domain. Residues arginine 299 to leucine 349 form the EGF-like; atypical domain. Disulfide bonds link cysteine 303–cysteine 320, cysteine 314–cysteine 330, and cysteine 332–cysteine 348. A PAN domain is found at cysteine 357–asparagine 446. N-linked (GlcNAc...) asparagine glycosylation occurs at asparagine 361. 2 disulfides stabilise this stretch: cysteine 397-cysteine 420 and cysteine 401-cysteine 407. The N-linked (GlcNAc...) asparagine glycan is linked to asparagine 446. A helical membrane pass occupies residues leucine 462–aspartate 482. The Cytoplasmic portion of the chain corresponds to threonine 483–valine 832. Residues arginine 531–isoleucine 803 enclose the Protein kinase domain. ATP contacts are provided by residues leucine 537–valine 545 and lysine 563. Positions arginine 622–isoleucine 638 are caM-binding. Aspartate 657 acts as the Proton acceptor in catalysis.

It belongs to the protein kinase superfamily. Ser/Thr protein kinase family.

The protein resides in the cell membrane. The catalysed reaction is L-seryl-[protein] + ATP = O-phospho-L-seryl-[protein] + ADP + H(+). The enzyme catalyses L-threonyl-[protein] + ATP = O-phospho-L-threonyl-[protein] + ADP + H(+). The protein is G-type lectin S-receptor-like serine/threonine-protein kinase RLK1 (RLK1) of Arabidopsis thaliana (Mouse-ear cress).